An 889-amino-acid polypeptide reads, in one-letter code: MAPETNEKCKACGGFNFSMIDGFKYCDRCGTLLENFEELEAEEGGIQQTRGAGKIKIKKKGGDDGEKKTTNLVSTNESNVQIMRKALEKRSDFFSRQALKNDELAFPHESTPDYLYRLGLRLAAFTQVLAKVGHVLVKELNFEPRVLPTILATFQRYLAHCHVAFCHSEQCGSDEQLRFVAMMENLEFEQQEREEKRRKKLARRGKGVKALSKSAAAWTLLTQGNITENLDLDSEEDEEEEENPNLNKSMENLEFEDTQNDETVAVNDTTVGFVRKITTALSTEALRRARQMILNLEILVAIIHSALMSCGYRNVLASDVVRWIREDRFRISLRSIRLMRHSAKEQETKEAMTKVDYAEPYLRFPLYEITRTSTLFHQSLNLNEKLVSLNFETLAARLCDNLNLPVEFLSRVLLLESMIPCDVNPSLRKQADVSMGHNCEQLAAIQPKLYNSGFLSCFGRKERTWREADNCDESVKLALLRIQCICRVLLSPDTKLMAYILLVFRLTFDIDNATCSPDSKDALKFDIDTWIHQLEMRLKCWQEHDMSMVLRSSCPVPDIQISTPFGPNYSYYDKKGNPWVHRLRRQVGFAKCIPSEMSFNSTSSLPTVFDIRQNRFKTERRQLEAVMSPLKFQRVILRKEMERDPEKYRNIVDPDSEKTFFKDFTVRKVLENTQKIAETSNSFDEYFPCASRYTIYKRPDWIQNCTARSKQLSPKIGPYRFYISNQACDDLLGVATSSFSPRFKFLLDSLALIIGEDPKALYTAFVMLEMHLTSSDTLETIRESLLRSKPITVKCQKFRKTMWHVECLRRVVTEHPVGKIEDLKYFIVASTRESQEELAESSEAYLMHFRNHEIREDLTSLEAEKVQNRVLKLAYDFETFFGILAVKMW.

An RRN7-type zinc finger spans residues Met-1–Leu-33. Zn(2+) contacts are provided by Cys-9, Cys-12, Cys-26, and Cys-29. Residues Asn-35–Asn-101 are B-reader. Residues Asp-102–Asp-113 form a B-linker region. The tract at residues Tyr-114–Ala-351 is N-terminal cyclin fold. The tract at residues Asn-229–Leu-253 is disordered. The segment covering Leu-230–Asn-243 has biased composition (acidic residues). Positions Met-352–Ile-510 are C-terminal cyclin fold.

Belongs to the RRN7/TAF1B family.

It is found in the nucleus. It localises to the nucleolus. Functionally, component of RNA polymerase I core factor complex that acts as a GTF2B/TFIIB-like factor and plays a key role in multiple steps during transcription initiation such as pre-initiation complex (PIC) assembly and postpolymerase recruitment events in polymerase I (Pol I) transcription. Binds rDNA promoters and plays a role in Pol I recruitment. In Caenorhabditis briggsae, this protein is TATA box-binding protein-associated factor RNA polymerase I subunit B.